The following is a 237-amino-acid chain: 1-(5-phosphoribosyl)-5-[(5-phosphoribosylamino)methylideneamino] imidazole-4-carboxamide isomerase (237 aa).

D8 (proton acceptor) is an active-site residue. D129 serves as the catalytic Proton donor.

This sequence belongs to the HisA/HisF family.

Its subcellular location is the cytoplasm. The enzyme catalyses 1-(5-phospho-beta-D-ribosyl)-5-[(5-phospho-beta-D-ribosylamino)methylideneamino]imidazole-4-carboxamide = 5-[(5-phospho-1-deoxy-D-ribulos-1-ylimino)methylamino]-1-(5-phospho-beta-D-ribosyl)imidazole-4-carboxamide. It functions in the pathway amino-acid biosynthesis; L-histidine biosynthesis; L-histidine from 5-phospho-alpha-D-ribose 1-diphosphate: step 4/9. The sequence is that of 1-(5-phosphoribosyl)-5-[(5-phosphoribosylamino)methylideneamino] imidazole-4-carboxamide isomerase from Acetivibrio thermocellus (strain ATCC 27405 / DSM 1237 / JCM 9322 / NBRC 103400 / NCIMB 10682 / NRRL B-4536 / VPI 7372) (Clostridium thermocellum).